The following is a 361-amino-acid chain: Phospho-N-acetylmuramoyl-pentapeptide-transferase (361 aa).

10 consecutive transmembrane segments (helical) span residues 28-48, 73-93, 98-118, 132-152, 168-188, 199-219, 235-255, 263-283, 288-308, and 338-358; these read LAIL…IRWL, TMGG…WGNL, MWIM…DDYL, YKLF…YFNP, WLID…VGSS, GLAA…LYIS, GTGE…GFLW, VFMG…LAVI, IVLA…ILQV, and KVIV…LLTL.

The protein belongs to the glycosyltransferase 4 family. MraY subfamily. It depends on Mg(2+) as a cofactor.

The protein resides in the cell inner membrane. The catalysed reaction is UDP-N-acetyl-alpha-D-muramoyl-L-alanyl-gamma-D-glutamyl-meso-2,6-diaminopimeloyl-D-alanyl-D-alanine + di-trans,octa-cis-undecaprenyl phosphate = di-trans,octa-cis-undecaprenyl diphospho-N-acetyl-alpha-D-muramoyl-L-alanyl-D-glutamyl-meso-2,6-diaminopimeloyl-D-alanyl-D-alanine + UMP. It participates in cell wall biogenesis; peptidoglycan biosynthesis. Functionally, catalyzes the initial step of the lipid cycle reactions in the biosynthesis of the cell wall peptidoglycan: transfers peptidoglycan precursor phospho-MurNAc-pentapeptide from UDP-MurNAc-pentapeptide onto the lipid carrier undecaprenyl phosphate, yielding undecaprenyl-pyrophosphoryl-MurNAc-pentapeptide, known as lipid I. The sequence is that of Phospho-N-acetylmuramoyl-pentapeptide-transferase from Thermodesulfovibrio yellowstonii (strain ATCC 51303 / DSM 11347 / YP87).